The following is a 297-amino-acid chain: Glycine--tRNA ligase alpha subunit (297 aa).

Belongs to the class-II aminoacyl-tRNA synthetase family. In terms of assembly, tetramer of two alpha and two beta subunits.

The protein resides in the cytoplasm. The enzyme catalyses tRNA(Gly) + glycine + ATP = glycyl-tRNA(Gly) + AMP + diphosphate. This Halalkalibacterium halodurans (strain ATCC BAA-125 / DSM 18197 / FERM 7344 / JCM 9153 / C-125) (Bacillus halodurans) protein is Glycine--tRNA ligase alpha subunit (glyQ).